The chain runs to 938 residues: MRFFCFGMLLPFTFVLANEGLQLPLETYITLSPEYQAAPQVGFTHNQNQDLAIVGNHNDFILDYKYYRSNGGALTCKNLLISENIGNVFFEKNVCPNSGGAIYAAQNCTISKNQNYAFTTNLVSDNPTATAGSLLGGALFAINCSITNNLGQGTFVDNLALNKGGALYTETNLSIKDNKGPIIIKQNRALNSDSLGGGIYSGNSLNIEGNSGAIQITSNSSGSGGGIFSTQTLTISSNKKLIEISENSAFANNYGSNFNPGGGGLTTTFCTILNNREGVLFNNNQSQSNGGAIHAKSIIIKENGPVYFLNNTATRGGALLNLSAGSGNGSFILSADNGDIIFNNNTASKHALNPPYRNAIHSTPNMNLQIGARPGYRVLFYDPIEHELPSSFPILFNFETGHTGTVLFSGEHVHQNFTDEMNFFSYLRNTSELRQGVLAVEDGAGLACYKFFQRGGTLLLGQGAVITTAGTIPTPSSTPTTVGSTITLNHIAIDLPSILSFQAQAPKIWIYPTKTGSTYTEDSNPTITISGTLTLRNSNNEDPYDSLDLSHSLEKVPLLYIVDVAAQKINSSQLDLSTLNSGEHYGYQGIWSTYWVETTTITNPTSLLGANTKHKLLYANWSPLGYRPHPERRGEFITNALWQSAYTALAGLHSLSSWDEEKGHAASLQGIGLLVHQKDKNGFKGFRSHMTGYSATTEATSSQSPNFSLGFAQFFSKAKEHESQNSTSSHHYFSGMCIENTLFKEWIRLSVSLAYMFTSEHTHTMYQGLLEGNSQGSFHNHTLAGALSCVFLPQPHGESLQIYPFITALAIRGNLAAFQESGDHAREFSLHRPLTDVSLPVGIRASWKNHHRVPLVWLTEISYRSTLYRQDPELHSKLLISQGTWTTQATPVTYNALGIKVKNTMQVFPKVTLSLDYSADISSSTLSHYLNVASRMRF.

The first 17 residues, 1 to 17 (MRFFCFGMLLPFTFVLA), serve as a signal peptide directing secretion. One can recognise an Autotransporter domain in the interval 659–938 (DEEKGHAASL…YLNVASRMRF (280 aa)).

It belongs to the PMP outer membrane protein family.

It localises to the secreted. The protein localises to the cell wall. Its subcellular location is the cell outer membrane. This chain is Probable outer membrane protein pmp15 (pmp15), found in Chlamydia pneumoniae (Chlamydophila pneumoniae).